A 128-amino-acid polypeptide reads, in one-letter code: Aspartate 1-decarboxylase (128 aa).

S25 (schiff-base intermediate with substrate; via pyruvic acid) is an active-site residue. Position 25 is a pyruvic acid (Ser) (S25). T57 serves as a coordination point for substrate. The active-site Proton donor is Y58. 73-75 (GAA) is a substrate binding site.

It belongs to the PanD family. Heterooctamer of four alpha and four beta subunits. It depends on pyruvate as a cofactor. Post-translationally, is synthesized initially as an inactive proenzyme, which is activated by self-cleavage at a specific serine bond to produce a beta-subunit with a hydroxyl group at its C-terminus and an alpha-subunit with a pyruvoyl group at its N-terminus.

It is found in the cytoplasm. The enzyme catalyses L-aspartate + H(+) = beta-alanine + CO2. The protein operates within cofactor biosynthesis; (R)-pantothenate biosynthesis; beta-alanine from L-aspartate: step 1/1. Functionally, catalyzes the pyruvoyl-dependent decarboxylation of aspartate to produce beta-alanine. This chain is Aspartate 1-decarboxylase, found in Caldicellulosiruptor bescii (strain ATCC BAA-1888 / DSM 6725 / KCTC 15123 / Z-1320) (Anaerocellum thermophilum).